The chain runs to 839 residues: Molybdenum cofactor sulfurase (839 aa).

An N6-(pyridoxal phosphate)lysine modification is found at Lys-237. Residue Cys-401 is part of the active site. The segment covering 651 to 662 (DQNYSQKQSPSM) has biased composition (polar residues). Positions 651–678 (DQNYSQKQSPSMPGSFPQAPSSPDPYPT) are disordered. The MOSC domain maps to 656-834 (QKQSPSMPGS…IMVGDAVTPS (179 aa)).

Belongs to the class-V pyridoxal-phosphate-dependent aminotransferase family. MOCOS subfamily. Pyridoxal 5'-phosphate serves as cofactor.

It catalyses the reaction Mo-molybdopterin + L-cysteine + AH2 = thio-Mo-molybdopterin + L-alanine + A + H2O. It participates in cofactor biosynthesis; molybdopterin biosynthesis. Functionally, sulfurates the molybdenum cofactor. Sulfation of molybdenum is essential for xanthine dehydrogenase (XDH) and aldehyde oxidase (ADO) enzymes in which molybdenum cofactor is liganded by 1 oxygen and 1 sulfur atom in active form. This is Molybdenum cofactor sulfurase from Emericella nidulans (strain FGSC A4 / ATCC 38163 / CBS 112.46 / NRRL 194 / M139) (Aspergillus nidulans).